The chain runs to 134 residues: Small ribosomal subunit protein uS11 (134 aa).

The tract at residues 115 to 134 (TPIPHNGTRPPKKVLKRDLK) is disordered. Residues 124 to 134 (PPKKVLKRDLK) are compositionally biased toward basic residues.

It belongs to the universal ribosomal protein uS11 family. As to quaternary structure, part of the 30S ribosomal subunit. Interacts with proteins S7 and S18. Binds to IF-3.

Located on the platform of the 30S subunit, it bridges several disparate RNA helices of the 16S rRNA. Forms part of the Shine-Dalgarno cleft in the 70S ribosome. This chain is Small ribosomal subunit protein uS11, found in Mycoplasma mobile (strain ATCC 43663 / 163K / NCTC 11711) (Mesomycoplasma mobile).